The chain runs to 135 residues: uncharacterized protein (135 aa).

The tract at residues 56–135 (VQSHNRGINN…QKGQLKIEKV (80 aa)) is disordered. Basic residues predominate over residues 64–74 (NNRRRDQKRKQ). Residues 77–89 (SIKQDNDLNVSSE) show a composition bias toward polar residues. The segment covering 108–135 (YKETPDLDEPGSREKRVSQKGQLKIEKV) has biased composition (basic and acidic residues).

This is an uncharacterized protein from Schizosaccharomyces pombe (strain 972 / ATCC 24843) (Fission yeast).